We begin with the raw amino-acid sequence, 540 residues long: Probable ATP-dependent RNA helicase DDX28 (540 aa).

The Mitochondrial targeting signal signature appears at leucine 3 to leucine 18. The short motif at glycine 126 to serine 156 is the Q motif element. One can recognise a Helicase ATP-binding domain in the interval isoleucine 159–threonine 351. Position 172 to 179 (alanine 172 to threonine 179) interacts with ATP. The short motif at leucine 180 to leucine 191 is the Nuclear export signal element. The DEAD signature appears at aspartate 286 to aspartate 289. The 160-residue stretch at lysine 377 to leucine 536 folds into the Helicase C-terminal domain. The short motif at arginine 520–arginine 523 is the Nuclear localization signal element.

This sequence belongs to the DEAD box helicase family. In terms of assembly, monomer. Found in a complex with GRSF1, DHX30, FASTKD2 and FASTKD5. Associates with the 16S mitochondrial rRNA (16S mt-rRNA) and with the mitochondrial ribosome large subunit (39S). In terms of tissue distribution, expressed in all tissues tested, including brain, placenta, lung, liver, skeletal muscle, kidney, pancreas, leukocytes, colon, small intestine, ovary and prostate.

It is found in the nucleus. Its subcellular location is the mitochondrion. The protein localises to the mitochondrion matrix. The protein resides in the mitochondrion nucleoid. The catalysed reaction is ATP + H2O = ADP + phosphate + H(+). Functionally, plays an essential role in facilitating the proper assembly of the mitochondrial large ribosomal subunit and its helicase activity is essential for this function. May be involved in RNA processing or transport. Has RNA and Mg(2+)-dependent ATPase activity. The chain is Probable ATP-dependent RNA helicase DDX28 (DDX28) from Homo sapiens (Human).